We begin with the raw amino-acid sequence, 82 residues long: Cytotoxin 10 (82 aa).

A signal peptide spans 1 to 22 (MKTLLLTLVVVVTIVCLDLGYT). Cystine bridges form between C25–C43, C36–C60, C64–C75, and C76–C81.

Belongs to the three-finger toxin family. Short-chain subfamily. Type IA cytotoxin sub-subfamily. Monomer in solution; Homodimer and oligomer in the presence of negatively charged lipids forming a pore with a size ranging between 20 and 30 Angstroms. In terms of tissue distribution, expressed by the venom gland.

It localises to the secreted. The protein localises to the target cell membrane. Functionally, shows cytolytic activity on many different cells by forming pore in lipid membranes. In vivo, increases heart rate or kills the animal by cardiac arrest. In addition, it binds to heparin with high affinity, interacts with Kv channel-interacting protein 1 (KCNIP1) in a calcium-independent manner, and binds to integrin alpha-V/beta-3 (ITGAV/ITGB3) with moderate affinity. The protein is Cytotoxin 10 of Naja atra (Chinese cobra).